The following is a 564-amino-acid chain: uncharacterized protein (564 aa).

The span at 1–17 (MRRPSTASLTRTPSRAS) shows a compositional bias: polar residues. Residues 1 to 564 (MRRPSTASLT…ASTPSSEVIS (564 aa)) are disordered. Low complexity-rich tracts occupy residues 79–97 (SPRT…RASP) and 114–134 (SPTG…ASPT). The span at 153–168 (RSPSTASLTRTPSRAS) shows a compositional bias: polar residues. The span at 170–179 (TRWPPRASPT) shows a compositional bias: low complexity. Residues 250-271 (GSPPRASPMTPPRASPRTPPRA) are compositionally biased toward pro residues. Residues 272–299 (SPTTTPSRASLTRTPSWASPTTTPSRAS) show a composition bias toward low complexity. Polar residues predominate over residues 318–351 (PTGTPSRASPTGTPSRASLTGSPSRASLTGTPSR). The span at 378–416 (RASLTGTSSTASLTRTPSRASLTRTQSSSSLTRTPSMAS) shows a compositional bias: low complexity. The segment covering 467-564 (SRASLTRTPS…ASTPSSEVIS (98 aa)) has biased composition (polar residues).

This is an uncharacterized protein from Homo sapiens (Human).